Here is a 107-residue protein sequence, read N- to C-terminus: uncharacterized protein (107 aa).

Residues 12–32 traverse the membrane as a helical segment; sequence IILNIFLALLLVYFIFHCIYG.

It is found in the membrane. This is an uncharacterized protein from Rickettsia prowazekii (strain Madrid E).